The following is a 624-amino-acid chain: Carbon monoxide dehydrogenase (624 aa).

C37, C46, C49, C54, and C65 together coordinate [4Fe-4S] cluster. The [Ni-4Fe-5S] cluster site is built by H256, C292, C336, C444, C475, and C516.

The protein belongs to the Ni-containing carbon monoxide dehydrogenase family. As to quaternary structure, homodimer. It depends on [4Fe-4S] cluster as a cofactor. The cofactor is [Ni-4Fe-5S] cluster.

The catalysed reaction is CO + 2 oxidized [2Fe-2S]-[ferredoxin] + H2O = 2 reduced [2Fe-2S]-[ferredoxin] + CO2 + 2 H(+). In terms of biological role, CODH oxidizes carbon monoxide coupled, via CooF, to the reduction of a hydrogen cation by a hydrogenase (possibly CooH). This is Carbon monoxide dehydrogenase (cooS) from Methanocaldococcus jannaschii (strain ATCC 43067 / DSM 2661 / JAL-1 / JCM 10045 / NBRC 100440) (Methanococcus jannaschii).